Consider the following 195-residue polypeptide: Triosephosphate isomerase, cytosolic (195 aa).

Histidine 37 functions as the Electrophile in the catalytic mechanism. Glutamate 107 acts as the Proton acceptor in catalysis.

This sequence belongs to the triosephosphate isomerase family. In terms of assembly, homodimer.

It localises to the cytoplasm. It carries out the reaction D-glyceraldehyde 3-phosphate = dihydroxyacetone phosphate. It participates in carbohydrate biosynthesis; gluconeogenesis. Its pathway is carbohydrate degradation; glycolysis; D-glyceraldehyde 3-phosphate from glycerone phosphate: step 1/1. The protein is Triosephosphate isomerase, cytosolic of Lactuca sativa (Garden lettuce).